Consider the following 217-residue polypeptide: Germin-like protein subfamily 1 member 1 (217 aa).

A signal peptide spans 1–18; the sequence is MILNILLTLTLLMGRVKS. An intrachain disulfide couples Cys-27 to Cys-45. One can recognise a Cupin type-1 domain in the interval 59-209; sequence SALSRPGNTK…AYDINGQDVA (151 aa). The N-linked (GlcNAc...) asparagine glycan is linked to Asn-75. Residues His-108, His-110, Glu-115, and His-154 each contribute to the Mn(2+) site.

It belongs to the germin family. Oligomer (believed to be a pentamer but probably hexamer).

It is found in the secreted. Its subcellular location is the extracellular space. The protein resides in the apoplast. Functionally, may play a role in plant defense. Probably has no oxalate oxidase activity even if the active site is conserved. The sequence is that of Germin-like protein subfamily 1 member 1 (GLP7) from Arabidopsis thaliana (Mouse-ear cress).